The sequence spans 281 residues: Ribosomal RNA small subunit methyltransferase A (281 aa).

S-adenosyl-L-methionine contacts are provided by Asn-36, Leu-38, Gly-63, Glu-84, Asp-109, and Asn-127.

The protein belongs to the class I-like SAM-binding methyltransferase superfamily. rRNA adenine N(6)-methyltransferase family. RsmA subfamily.

It is found in the cytoplasm. It catalyses the reaction adenosine(1518)/adenosine(1519) in 16S rRNA + 4 S-adenosyl-L-methionine = N(6)-dimethyladenosine(1518)/N(6)-dimethyladenosine(1519) in 16S rRNA + 4 S-adenosyl-L-homocysteine + 4 H(+). Its function is as follows. Specifically dimethylates two adjacent adenosines (A1518 and A1519) in the loop of a conserved hairpin near the 3'-end of 16S rRNA in the 30S particle. May play a critical role in biogenesis of 30S subunits. This is Ribosomal RNA small subunit methyltransferase A from Borrelia garinii subsp. bavariensis (strain ATCC BAA-2496 / DSM 23469 / PBi) (Borreliella bavariensis).